A 108-amino-acid polypeptide reads, in one-letter code: uncharacterized protein (108 aa).

Helical transmembrane passes span 36–56, 58–78, and 88–108; these read LAIM…DKMI, FIFV…KLLF, and IVFL…FFNL.

The protein resides in the cell membrane. This is an uncharacterized protein from Alkalihalophilus pseudofirmus (strain ATCC BAA-2126 / JCM 17055 / OF4) (Bacillus pseudofirmus).